We begin with the raw amino-acid sequence, 565 residues long: MASTDTYNPTRDDFAAMLDESFAGGNLQESSVIKGKVVAIEKDMAVIDVGLKTEGRVPLREFAGPGRDNEIKVGDTVEVFLDRIENALGEAVLSRDKARREESWGKLEKAFQNNEKVFGVIFNQVKGGFTVDLDGAVAFLPRSQVDIRPIRDVAPLMNNSQPFQILKMDRRRGNIVVSRRTVLEETRAEQRQELVQNLEEGQVIDGVVKNITDYGAFVDLGGIDGLLHVTDIAWRRVNHPTEVLTIGQTVKVKIIKINHETHRISLGMKQLLDDPWQGIEAKYPLNARFTGRVTNITDYGAFVELEPGIEGLIHVSEMSWTKKNMHPGKIVSTSQEVEVQVLEVDSVKRRISLGLKQTMRNPWEVFVEKHPVGSTVEGEVKNKTEFGLFLGLDGDVDGMVHLSDLDWKLPGEQVIDNFKKGDMVKAVVLDVDVEKERISLGVKQLEGDPFAEPGDVKKGAVVTCEVLDVKESGIDVQIVGTDFNTFIKRSELARDRNDQRSDRFAVGEKVDARVIQFDKKARKVQVSIKALEVAEEKEAIAQYGSSDSGATLGDILGTALKQRDK.

6 consecutive S1 motif domains span residues 30–96, 114–180, 201–269, 286–356, 373–443, and 454–529; these read SSVI…LSRD, NEKV…VSRR, GQVI…LGMK, NARF…LGLK, GSTV…LGVK, and GDVK…VSIK.

Belongs to the bacterial ribosomal protein bS1 family. In terms of processing, the initiator methionine may be removed.

Functionally, binds mRNA; thus facilitating recognition of the initiation point. It is needed to translate mRNA with a short Shine-Dalgarno (SD) purine-rich sequence. This Rhodopseudomonas palustris (strain ATCC BAA-98 / CGA009) protein is Small ribosomal subunit protein bS1 (rpsA).